We begin with the raw amino-acid sequence, 415 residues long: Protein CDC73 homolog (415 aa).

This sequence belongs to the CDC73 family. As to quaternary structure, component of the nuclear PAF1 complex (PAF1C), which consists of VIP2/ELF7/PAF1, VIP3/SKI8/WDR61, VIP4/LEO1, VIP5/RTF1, VIP6/ELF8/CTR9 and CDC73. As to expression, expressed in root tips, shoot apex, young leaves and flowers, especially in stamen filaments and carpels.

It is found in the nucleus. In terms of biological role, component of the PAF1 complex (PAF1C) which is involved in histone modifications such as methylation on histone H3 'Lys-4' (H3K4me3). Involved in regulation of flowering time. Required for the expression of the flowering repressors FLC and MADS-box genes of the MAF family. Required for histone H3 trimethylation on 'Lys-4' (H3K4me3) at the FLC locus. Prevents trimethylation on 'Lys-27' (H3K27me3) at the same locus. The polypeptide is Protein CDC73 homolog (Arabidopsis thaliana (Mouse-ear cress)).